The chain runs to 211 residues: Fucoxanthin-chlorophyll a-c binding protein F, chloroplastic (211 aa).

Residues 1 to 33 constitute a chloroplast transit peptide; the sequence is AIACAAAPGLRGPSAFNGAALSTPAKSSSAMKM. Transmembrane regions (helical) follow at residues 75 to 95, 116 to 136, and 177 to 197; these read IAMLAIAGHLTQQNTRLPGML, IPPGGLAQIFGFIGFLELAVM, and GRAAQMGILGMMVHEELSNQP.

Belongs to the fucoxanthin chlorophyll protein family. As to quaternary structure, the LHC complex of chromophytic algae is composed of fucoxanthin, chlorophyll A and C bound non-covalently by fucoxanthin chlorophyll proteins (FCPs). The ratio of pigments in this LHC is; fucoxanthin: chlorophyll C: chlorophyll A; (0.6-1): (0.1-0.3): (1).

The protein localises to the plastid. Its subcellular location is the chloroplast thylakoid membrane. Functionally, the light-harvesting complex (LHC) functions as a light receptor, it captures and delivers excitation energy to photosystems with which it is closely associated. Energy is transferred from the carotenoid and chlorophyll C (or B) to chlorophyll A and the photosynthetic reaction centers where it is used to synthesize ATP and reducing power. This Macrocystis pyrifera (Giant kelp) protein is Fucoxanthin-chlorophyll a-c binding protein F, chloroplastic (FCPF).